Consider the following 968-residue polypeptide: RNA polymerase-associated protein RapA (968 aa).

The region spanning 164–334 is the Helicase ATP-binding domain; sequence DVGRRHAPRV…FARLRLLDPN (171 aa). 177-184 contributes to the ATP binding site; it reads DEVGLGKT. The short motif at 280-283 is the DEAH box element; sequence DEAH. In terms of domain architecture, Helicase C-terminal spans 490–662; that stretch reads RVEWLMGYLT…YLASPDQTEG (173 aa).

The protein belongs to the SNF2/RAD54 helicase family. RapA subfamily. In terms of assembly, interacts with the RNAP. Has a higher affinity for the core RNAP than for the holoenzyme. Its ATPase activity is stimulated by binding to RNAP.

Its function is as follows. Transcription regulator that activates transcription by stimulating RNA polymerase (RNAP) recycling in case of stress conditions such as supercoiled DNA or high salt concentrations. Probably acts by releasing the RNAP, when it is trapped or immobilized on tightly supercoiled DNA. Does not activate transcription on linear DNA. Probably not involved in DNA repair. In Escherichia coli (strain 55989 / EAEC), this protein is RNA polymerase-associated protein RapA.